The sequence spans 619 residues: 1-deoxy-D-xylulose-5-phosphate synthase (619 aa).

Residues H74 and 115-117 (GHS) contribute to the thiamine diphosphate site. D146 is a binding site for Mg(2+). Thiamine diphosphate-binding positions include 147–148 (GA), N175, Y285, and E365. Residue N175 participates in Mg(2+) binding.

It belongs to the transketolase family. DXPS subfamily. As to quaternary structure, homodimer. Mg(2+) is required as a cofactor. It depends on thiamine diphosphate as a cofactor.

It catalyses the reaction D-glyceraldehyde 3-phosphate + pyruvate + H(+) = 1-deoxy-D-xylulose 5-phosphate + CO2. It functions in the pathway metabolic intermediate biosynthesis; 1-deoxy-D-xylulose 5-phosphate biosynthesis; 1-deoxy-D-xylulose 5-phosphate from D-glyceraldehyde 3-phosphate and pyruvate: step 1/1. In terms of biological role, catalyzes the acyloin condensation reaction between C atoms 2 and 3 of pyruvate and glyceraldehyde 3-phosphate to yield 1-deoxy-D-xylulose-5-phosphate (DXP). In Clostridium acetobutylicum (strain ATCC 824 / DSM 792 / JCM 1419 / IAM 19013 / LMG 5710 / NBRC 13948 / NRRL B-527 / VKM B-1787 / 2291 / W), this protein is 1-deoxy-D-xylulose-5-phosphate synthase.